The sequence spans 218 residues: Ribose-5-phosphate isomerase A (218 aa).

Substrate-binding positions include 28 to 31 (TGST), 81 to 84 (DGAD), and 94 to 97 (KGGG). Glu103 serves as the catalytic Proton acceptor. Lys121 is a binding site for substrate.

It belongs to the ribose 5-phosphate isomerase family. In terms of assembly, homodimer.

It catalyses the reaction aldehydo-D-ribose 5-phosphate = D-ribulose 5-phosphate. Its pathway is carbohydrate degradation; pentose phosphate pathway; D-ribose 5-phosphate from D-ribulose 5-phosphate (non-oxidative stage): step 1/1. Its function is as follows. Catalyzes the reversible conversion of ribose-5-phosphate to ribulose 5-phosphate. This Aliivibrio salmonicida (strain LFI1238) (Vibrio salmonicida (strain LFI1238)) protein is Ribose-5-phosphate isomerase A.